Consider the following 532-residue polypeptide: O-phosphoserine--tRNA(Cys) ligase (532 aa).

Residues 186–188 (HMT), 231–233 (SAS), 273–274 (YY), and Asn-317 each bind substrate.

This sequence belongs to the class-II aminoacyl-tRNA synthetase family. O-phosphoseryl-tRNA(Cys) synthetase subfamily. As to quaternary structure, homotetramer. Interacts with SepCysS.

It catalyses the reaction tRNA(Cys) + O-phospho-L-serine + ATP = O-phospho-L-seryl-tRNA(Cys) + AMP + diphosphate. Functionally, catalyzes the attachment of O-phosphoserine (Sep) to tRNA(Cys). This chain is O-phosphoserine--tRNA(Cys) ligase, found in Methanothermobacter thermautotrophicus (strain ATCC 29096 / DSM 1053 / JCM 10044 / NBRC 100330 / Delta H) (Methanobacterium thermoautotrophicum).